A 151-amino-acid polypeptide reads, in one-letter code: Sigma factor binding protein 1, chloroplastic (151 aa).

Positions M1–S13 are enriched in low complexity. 2 disordered regions span residues M1–K41 and T66–E93. Residues M1 to C54 constitute a chloroplast transit peptide. The Bipartite nuclear localization signal signature appears at K16–K32. A VQ motif is present at residues F58–G67.

As to quaternary structure, interacts with the sigma factor SIGA in chloroplast. Interacts with WRKY25 and WRKY33 in the nucleus. As to expression, expressed in leaves and roots, but not in flowers.

The protein localises to the plastid. It localises to the chloroplast. Its subcellular location is the nucleus. Contributes to plant defense. May regulate chloroplast metabolism upon infection with pathogens such as Pseudomonas syringae. Functions as activator of WRKY33 in plant defense against necrotrophic pathogens by stimulating the DNA-binding activity of WRKY33. In Arabidopsis thaliana (Mouse-ear cress), this protein is Sigma factor binding protein 1, chloroplastic (SIB1).